A 101-amino-acid polypeptide reads, in one-letter code: Urease subunit beta (101 aa).

The protein belongs to the urease beta subunit family. As to quaternary structure, heterotrimer of UreA (gamma), UreB (beta) and UreC (alpha) subunits. Three heterotrimers associate to form the active enzyme.

The protein resides in the cytoplasm. The enzyme catalyses urea + 2 H2O + H(+) = hydrogencarbonate + 2 NH4(+). It participates in nitrogen metabolism; urea degradation; CO(2) and NH(3) from urea (urease route): step 1/1. In Rhizobium etli (strain CIAT 652), this protein is Urease subunit beta.